The following is a 171-amino-acid chain: Crossover junction endodeoxyribonuclease RuvC (171 aa).

Catalysis depends on residues aspartate 7, glutamate 66, and aspartate 138. Mg(2+)-binding residues include aspartate 7, glutamate 66, and aspartate 138.

This sequence belongs to the RuvC family. As to quaternary structure, homodimer which binds Holliday junction (HJ) DNA. The HJ becomes 2-fold symmetrical on binding to RuvC with unstacked arms; it has a different conformation from HJ DNA in complex with RuvA. In the full resolvosome a probable DNA-RuvA(4)-RuvB(12)-RuvC(2) complex forms which resolves the HJ. The cofactor is Mg(2+).

The protein resides in the cytoplasm. It catalyses the reaction Endonucleolytic cleavage at a junction such as a reciprocal single-stranded crossover between two homologous DNA duplexes (Holliday junction).. The RuvA-RuvB-RuvC complex processes Holliday junction (HJ) DNA during genetic recombination and DNA repair. Endonuclease that resolves HJ intermediates. Cleaves cruciform DNA by making single-stranded nicks across the HJ at symmetrical positions within the homologous arms, yielding a 5'-phosphate and a 3'-hydroxyl group; requires a central core of homology in the junction. The consensus cleavage sequence is 5'-(A/T)TT(C/G)-3'. Cleavage occurs on the 3'-side of the TT dinucleotide at the point of strand exchange. HJ branch migration catalyzed by RuvA-RuvB allows RuvC to scan DNA until it finds its consensus sequence, where it cleaves and resolves the cruciform DNA. This chain is Crossover junction endodeoxyribonuclease RuvC, found in Thiobacillus denitrificans (strain ATCC 25259 / T1).